The following is a 231-amino-acid chain: ATP-dependent dethiobiotin synthetase BioD 2 (231 aa).

Position 13–18 (13–18 (SVGKTV)) interacts with ATP. Thr17 contacts Mg(2+). The active site involves Lys38. ATP-binding positions include Asp55, 112 to 115 (EGTG), 172 to 173 (NR), 201 to 203 (PYL), and Gln208. 2 residues coordinate Mg(2+): Asp55 and Glu112.

It belongs to the dethiobiotin synthetase family. In terms of assembly, homodimer. Mg(2+) is required as a cofactor.

The protein localises to the cytoplasm. The enzyme catalyses (7R,8S)-7,8-diammoniononanoate + CO2 + ATP = (4R,5S)-dethiobiotin + ADP + phosphate + 3 H(+). It functions in the pathway cofactor biosynthesis; biotin biosynthesis; biotin from 7,8-diaminononanoate: step 1/2. Catalyzes a mechanistically unusual reaction, the ATP-dependent insertion of CO2 between the N7 and N8 nitrogen atoms of 7,8-diaminopelargonic acid (DAPA, also called 7,8-diammoniononanoate) to form a ureido ring. This Salmonella typhimurium (strain LT2 / SGSC1412 / ATCC 700720) protein is ATP-dependent dethiobiotin synthetase BioD 2.